The primary structure comprises 63 residues: MSKGTPSFGKHNKGKTHIRCRRCGRHSFNVRKGYCVACGFGRSKRMRRYSWQNKKSWTRVRLK.

Residues C20, C23, C35, and C38 each coordinate Zn(2+). The C4-type zinc finger occupies 20 to 38 (CRRCGRHSFNVRKGYCVAC).

Belongs to the eukaryotic ribosomal protein eL37 family. The cofactor is Zn(2+).

Binds to the 23S rRNA. This Ignicoccus hospitalis (strain KIN4/I / DSM 18386 / JCM 14125) protein is Large ribosomal subunit protein eL37.